A 212-amino-acid polypeptide reads, in one-letter code: ATP phosphoribosyltransferase (212 aa).

The protein belongs to the ATP phosphoribosyltransferase family. Short subfamily. In terms of assembly, heteromultimer composed of HisG and HisZ subunits.

Its subcellular location is the cytoplasm. It carries out the reaction 1-(5-phospho-beta-D-ribosyl)-ATP + diphosphate = 5-phospho-alpha-D-ribose 1-diphosphate + ATP. The protein operates within amino-acid biosynthesis; L-histidine biosynthesis; L-histidine from 5-phospho-alpha-D-ribose 1-diphosphate: step 1/9. In terms of biological role, catalyzes the condensation of ATP and 5-phosphoribose 1-diphosphate to form N'-(5'-phosphoribosyl)-ATP (PR-ATP). Has a crucial role in the pathway because the rate of histidine biosynthesis seems to be controlled primarily by regulation of HisG enzymatic activity. The protein is ATP phosphoribosyltransferase of Citrifermentans bemidjiense (strain ATCC BAA-1014 / DSM 16622 / JCM 12645 / Bem) (Geobacter bemidjiensis).